The primary structure comprises 255 residues: UPF0246 protein CC_3385 (255 aa).

The protein belongs to the UPF0246 family.

The sequence is that of UPF0246 protein CC_3385 from Caulobacter vibrioides (strain ATCC 19089 / CIP 103742 / CB 15) (Caulobacter crescentus).